Here is a 51-residue protein sequence, read N- to C-terminus: Small ribosomal subunit protein eS31 (51 aa).

Zn(2+) is bound by residues C22, C25, C40, and C43. A C4-type zinc finger spans residues 22-43 (CVRCSHGIFMADHGDRYACGRC).

It belongs to the eukaryotic ribosomal protein eS31 family. In terms of assembly, part of the 30S ribosomal subunit. Zn(2+) serves as cofactor.

This is Small ribosomal subunit protein eS31 from Methanosphaera stadtmanae (strain ATCC 43021 / DSM 3091 / JCM 11832 / MCB-3).